We begin with the raw amino-acid sequence, 95 residues long: MLHTLSSSPYHADLDTLLRSVDEGDALVLLQDGVIAALAGGDIIHRLLASAVFLYVLRPDTEARGMTEQISNNVALIDYNEFVQLTVEHPQQLAW.

The protein belongs to the DsrH/TusB family. As to quaternary structure, heterohexamer, formed by a dimer of trimers. The hexameric TusBCD complex contains 2 copies each of TusB, TusC and TusD. The TusBCD complex interacts with TusE.

The protein localises to the cytoplasm. Functionally, part of a sulfur-relay system required for 2-thiolation of 5-methylaminomethyl-2-thiouridine (mnm(5)s(2)U) at tRNA wobble positions. This Pectobacterium parmentieri protein is Protein TusB.